Reading from the N-terminus, the 327-residue chain is Thiamine-binding periplasmic protein (327 aa).

Residues 1–18 form the signal peptide; it reads MLKKCLPLLLLCTAPVFA. Residues 59 to 60, 161 to 162, Trp197, and 215 to 218 contribute to the thiamine site; these read DG, ST, and YTTS.

The protein belongs to the bacterial solute-binding protein 1 family. In terms of assembly, monomer in solution. The complex is composed of two ATP-binding proteins (ThiQ), two transmembrane proteins (ThiP) and a solute-binding protein (ThiB).

The protein localises to the periplasm. With respect to regulation, transport is inhibited by the sulfhydryl-specific modifier N-ethylmaleimide. Part of the ABC transporter complex ThiBPQ involved in thiamine import. Binds thiamine, thiamine phosphate and thiamine diphosphate with high affinity. This is Thiamine-binding periplasmic protein (thiB) from Escherichia coli (strain K12).